Consider the following 483-residue polypeptide: Allantoate deiminase 2 (483 aa).

Positions 1–30 (MSSATASNTFFLHSCFLLFCLLSAPSCVSM) are cleaved as a signal peptide. The Mn(2+) site is built by His125, Asp136, Glu173, His239, and His457.

Belongs to the peptidase M20A family. Homodimer. Mn(2+) is required as a cofactor. Expressed in stems and leaves, and at low levels in roots. Not detected in nodules.

Its subcellular location is the endoplasmic reticulum. The catalysed reaction is allantoate + H2O + 2 H(+) = (S)-2-ureidoglycine + NH4(+) + CO2. Its function is as follows. Involved in the catabolism of purine nucleotides. Can use allantoate as substrate. The sequential activity of AAH, UGLYAH and UAH allows a complete purine breakdown without the intermediate generation of urea. The polypeptide is Allantoate deiminase 2 (Glycine max (Soybean)).